Here is a 357-residue protein sequence, read N- to C-terminus: 4-hydroxy-3-methylbut-2-en-1-yl diphosphate synthase (flavodoxin) (357 aa).

The [4Fe-4S] cluster site is built by Cys-265, Cys-268, Cys-300, and Glu-307.

It belongs to the IspG family. Homodimer. It depends on [4Fe-4S] cluster as a cofactor.

The catalysed reaction is (2E)-4-hydroxy-3-methylbut-2-enyl diphosphate + oxidized [flavodoxin] + H2O + 2 H(+) = 2-C-methyl-D-erythritol 2,4-cyclic diphosphate + reduced [flavodoxin]. It participates in isoprenoid biosynthesis; isopentenyl diphosphate biosynthesis via DXP pathway; isopentenyl diphosphate from 1-deoxy-D-xylulose 5-phosphate: step 5/6. In terms of biological role, converts 2C-methyl-D-erythritol 2,4-cyclodiphosphate (ME-2,4cPP) into 1-hydroxy-2-methyl-2-(E)-butenyl 4-diphosphate. The protein is 4-hydroxy-3-methylbut-2-en-1-yl diphosphate synthase (flavodoxin) of Aquifex aeolicus (strain VF5).